A 156-amino-acid chain; its full sequence is Small ribosomal subunit protein uS7c (156 aa).

It belongs to the universal ribosomal protein uS7 family. Part of the 30S ribosomal subunit.

Its subcellular location is the plastid. The protein resides in the chloroplast. Its function is as follows. One of the primary rRNA binding proteins, it binds directly to 16S rRNA where it nucleates assembly of the head domain of the 30S subunit. In Ostreococcus tauri, this protein is Small ribosomal subunit protein uS7c (rps7).